A 642-amino-acid chain; its full sequence is Threonine--tRNA ligase (642 aa).

Positions 1 to 61 constitute a TGS domain; that stretch reads MPVITLPDGS…ETDSDLSIIT (61 aa). Residues 243–534 form a catalytic region; that stretch reads DHRKIGKQLD…LIEEYAGKFP (292 aa). Zn(2+) contacts are provided by Cys334, His385, and His511.

The protein belongs to the class-II aminoacyl-tRNA synthetase family. As to quaternary structure, homodimer. Requires Zn(2+) as cofactor.

The protein localises to the cytoplasm. The enzyme catalyses tRNA(Thr) + L-threonine + ATP = L-threonyl-tRNA(Thr) + AMP + diphosphate + H(+). Its function is as follows. Catalyzes the attachment of threonine to tRNA(Thr) in a two-step reaction: L-threonine is first activated by ATP to form Thr-AMP and then transferred to the acceptor end of tRNA(Thr). Also edits incorrectly charged L-seryl-tRNA(Thr). This Shewanella pealeana (strain ATCC 700345 / ANG-SQ1) protein is Threonine--tRNA ligase.